The following is a 410-amino-acid chain: Multifunctional CCA protein (410 aa).

Residues glycine 8 and arginine 11 each contribute to the ATP site. CTP is bound by residues glycine 8 and arginine 11. 2 residues coordinate Mg(2+): aspartate 21 and aspartate 23. Arginine 91, arginine 137, and arginine 140 together coordinate ATP. Arginine 91, arginine 137, and arginine 140 together coordinate CTP. The HD domain occupies 228-329 (TGVHVLSVLQ…LELLQSFDVY (102 aa)).

It belongs to the tRNA nucleotidyltransferase/poly(A) polymerase family. Bacterial CCA-adding enzyme type 1 subfamily. As to quaternary structure, monomer. Can also form homodimers and oligomers. The cofactor is Mg(2+). It depends on Ni(2+) as a cofactor.

The enzyme catalyses a tRNA precursor + 2 CTP + ATP = a tRNA with a 3' CCA end + 3 diphosphate. The catalysed reaction is a tRNA with a 3' CCA end + 2 CTP + ATP = a tRNA with a 3' CCACCA end + 3 diphosphate. Its function is as follows. Catalyzes the addition and repair of the essential 3'-terminal CCA sequence in tRNAs without using a nucleic acid template. Adds these three nucleotides in the order of C, C, and A to the tRNA nucleotide-73, using CTP and ATP as substrates and producing inorganic pyrophosphate. tRNA 3'-terminal CCA addition is required both for tRNA processing and repair. Also involved in tRNA surveillance by mediating tandem CCA addition to generate a CCACCA at the 3' terminus of unstable tRNAs. While stable tRNAs receive only 3'-terminal CCA, unstable tRNAs are marked with CCACCA and rapidly degraded. This Pseudomonas paraeruginosa (strain DSM 24068 / PA7) (Pseudomonas aeruginosa (strain PA7)) protein is Multifunctional CCA protein.